Reading from the N-terminus, the 406-residue chain is Interactor protein for cytohesin exchange factors 1 (406 aa).

Residues 13-112 (HADCQGWLYK…WLNKLGFAVT (100 aa)) form the PH domain. Disordered regions lie at residues 120-173 (DEEC…FSSL), 253-285 (SLNN…EDDE), and 383-406 (PQDP…ENSL). Over residues 123 to 134 (CYSESEQEDPEV) the composition is skewed to acidic residues. Residues 144–153 (ASTTSSPVAA) are compositionally biased toward low complexity. At arginine 164 the chain carries Phosphoserine. The span at 272–285 (MADREEIKSSEDDE) shows a compositional bias: basic and acidic residues. Polar residues predominate over residues 392 to 406 (EVMNPTSSDCVENSL).

As to quaternary structure, interacts with guanine-nucleotide exchange factors PSCD1, PSCD2, PSCD3 and PSCD4.

The protein resides in the cytoplasm. Its subcellular location is the cell membrane. Enhances the promotion of guanine-nucleotide exchange by PSCD2 on ARF6 in a concentration-dependent manner. The polypeptide is Interactor protein for cytohesin exchange factors 1 (Ipcef1) (Mus musculus (Mouse)).